Reading from the N-terminus, the 431-residue chain is Levansucrase Lscbeta (431 aa).

Positions 61, 62, 148, 218, and 219 each coordinate sucrose. D62 functions as the Nucleophile in the catalytic mechanism. The active-site Proton donor/acceptor is the E303.

It belongs to the glycosyl hydrolase 68 family. As to quaternary structure, homodimer.

It carries out the reaction [6)-beta-D-fructofuranosyl-(2-&gt;](n) alpha-D-glucopyranoside + sucrose = [6)-beta-D-fructofuranosyl-(2-&gt;](n+1) alpha-D-glucopyranoside + D-glucose. Sucrose hydrolase activity is negatively affected by salt concentration. The levan polymerization rate is constant regardless of sucrose concentration. Catalyzes the synthesis of levan, a fructose polymer, by transferring the fructosyl moiety from sucrose to a growing acceptor molecule. Also displays sucrose hydrolase activity. The sequence is that of Levansucrase Lscbeta from Pseudomonas syringae pv. actinidiae.